Reading from the N-terminus, the 355-residue chain is GTPase Obg (355 aa).

In terms of domain architecture, Obg spans 1–159 (MKLVDEAEIL…RLLKLELKLL (159 aa)). Positions 160–342 (ADVGLLGFPN…IMKDVMAFFD (183 aa)) constitute an OBG-type G domain. Residues 166–173 (GFPNAGKS), 191–195 (FTTLY), 213–216 (DVPG), 292–295 (NKAD), and 323–325 (SAL) each bind GTP. Mg(2+)-binding residues include serine 173 and threonine 193.

The protein belongs to the TRAFAC class OBG-HflX-like GTPase superfamily. OBG GTPase family. As to quaternary structure, monomer. The cofactor is Mg(2+).

The protein localises to the cytoplasm. An essential GTPase which binds GTP, GDP and possibly (p)ppGpp with moderate affinity, with high nucleotide exchange rates and a fairly low GTP hydrolysis rate. Plays a role in control of the cell cycle, stress response, ribosome biogenesis and in those bacteria that undergo differentiation, in morphogenesis control. This chain is GTPase Obg, found in Xanthomonas axonopodis pv. citri (strain 306).